We begin with the raw amino-acid sequence, 165 residues long: Protein SprT (165 aa).

One can recognise a SprT-like domain in the interval 10 to 158 (EACYRQAEHF…CRRCKATLVF (149 aa)). Histidine 69 is a Zn(2+) binding site. Glutamate 70 is an active-site residue. Histidine 73 serves as a coordination point for Zn(2+).

It belongs to the SprT family. Zn(2+) is required as a cofactor.

The protein localises to the cytoplasm. This Pseudomonas aeruginosa (strain LESB58) protein is Protein SprT.